A 562-amino-acid chain; its full sequence is Arginine--tRNA ligase (562 aa).

The 'HIGH' region signature appears at 121–131; sequence PNIAKPMGMGH.

It belongs to the class-I aminoacyl-tRNA synthetase family. Monomer.

The protein resides in the cytoplasm. The enzyme catalyses tRNA(Arg) + L-arginine + ATP = L-arginyl-tRNA(Arg) + AMP + diphosphate. This Limosilactobacillus fermentum (strain NBRC 3956 / LMG 18251) (Lactobacillus fermentum) protein is Arginine--tRNA ligase.